A 289-amino-acid polypeptide reads, in one-letter code: Fumagillin beta-trans-bergamotene synthase af520 (289 aa).

Transmembrane regions (helical) follow at residues 35–55 (AVALVLAAPCSFHLIIKGFLW), 95–115 (TLLYRVLFFLMWVAAVYTNTI), 142–162 (LIGAIGLGCYCWGTTIIFDGG), 165–185 (LHGLKAVAVLMIVGIFATTGH), 222–242 (AWTIGLIALWKPPAIVTLAYV), and 262–282 (YVSYCWYGFWLLGSNILPIFP).

It belongs to the paxB family.

The protein localises to the membrane. The enzyme catalyses (2E,6E)-farnesyl diphosphate = (+)-exo-beta-bergamotene + diphosphate. The protein operates within secondary metabolite biosynthesis; terpenoid biosynthesis. Functionally, beta-trans-bergamotene synthase; part of the gene cluster that mediates the biosynthesis of fumagillin, a meroterpenoid that has numerous biological activities including irreversible inhibition of human type 2 methionine aminopeptidase (METAP2). Within the pathway, the membrane-bound fumagillin beta-trans-bergamotene synthase af520 converts farnesyl pyrophosphate (FPP) to beta-trans-bergamotene. The pathway begins with the conversion of FPP to beta-trans-bergamotene by af520. The multifunctional cytochrome P450 monooxygenase af510 then converts beta-trans-bergamotene into 5-keto-demethoxyfumagillol via several oxydation steps. 5-keto-demethoxyfumagillol is then subjected to successive C-6 hydroxylation and O-methylation by the dioxygenase af480 and O-methyltransferase af390-400, respectively, to yield 5-keto-fumagillol, which is then stereoselectively reduced by the keto-reductase af490 to 5R-hydroxy-seco-sesquiterpene. The next step is the polyketide transferase af380-catalyzed transfer of a dodecapentaenoyl group synthesized by the polyketide synthase af370 onto 5R-hydroxy-seco-sesquiterpene which leads to the production of prefumagillin. Finally, oxidative cleavage by the monooxygenase af470 converts prefumagillin to fumagillin. The polypeptide is Fumagillin beta-trans-bergamotene synthase af520 (Aspergillus fumigatus (strain ATCC MYA-4609 / CBS 101355 / FGSC A1100 / Af293) (Neosartorya fumigata)).